The primary structure comprises 304 residues: Ribosomal RNA small subunit methyltransferase H (304 aa).

S-adenosyl-L-methionine-binding positions include 37-39 (GGH), aspartate 57, phenylalanine 85, aspartate 100, and histidine 107.

The protein belongs to the methyltransferase superfamily. RsmH family.

Its subcellular location is the cytoplasm. The catalysed reaction is cytidine(1402) in 16S rRNA + S-adenosyl-L-methionine = N(4)-methylcytidine(1402) in 16S rRNA + S-adenosyl-L-homocysteine + H(+). Specifically methylates the N4 position of cytidine in position 1402 (C1402) of 16S rRNA. This is Ribosomal RNA small subunit methyltransferase H from Azobacteroides pseudotrichonymphae genomovar. CFP2.